Here is a 259-residue protein sequence, read N- to C-terminus: Submandibular glandular kallikrein-9 (259 aa).

The first 18 residues, 1-18 (MWFLILFLALSLGQIDAA), serve as a signal peptide directing secretion. The propeptide at 19-24 (PPGQSR) is activation peptide. A Peptidase S1 domain is found at 25–256 (VVGGYNCETN…FTSWIKKVMK (232 aa)). Disulfide bonds link Cys-31–Cys-171, Cys-48–Cys-64, Cys-150–Cys-217, Cys-182–Cys-196, and Cys-207–Cys-232. Catalysis depends on His-63, which acts as the Charge relay system. A glycan (N-linked (GlcNAc...) asparagine) is linked at Asn-106. Residue Asp-118 is the Charge relay system of the active site. Ser-211 (charge relay system) is an active-site residue.

This sequence belongs to the peptidase S1 family. Kallikrein subfamily. As to quaternary structure, heterodimer of a light chain and heavy chain linked by a disulfide bond.

It catalyses the reaction Preferential cleavage of Arg-|-Xaa bonds in small molecule substrates. Highly selective action to release kallidin (lysyl-bradykinin) from kininogen involves hydrolysis of Met-|-Xaa or Leu-|-Xaa.. Functionally, glandular kallikreins cleave Met-Lys and Arg-Ser bonds in kininogen to release Lys-bradykinin. This enzyme has a vasoconstrictor activity. KLK-9 has both a chymotrypsin-like and a trypsin-like properties. This Rattus norvegicus (Rat) protein is Submandibular glandular kallikrein-9 (Klk9).